Reading from the N-terminus, the 962-residue chain is Translation initiation factor IF-2 (962 aa).

The segment at 99-366 (VKAAQTQAAP…KKGKKLKLEP (268 aa)) is disordered. Positions 117 to 141 (DAAKARAEAAARAEARAKAEAEAAK) are enriched in basic and acidic residues. Over residues 145–155 (AKAGNKAKPAA) the composition is skewed to low complexity. Basic and acidic residues predominate over residues 173-216 (KPAEESKAEKAQADKMPSEKPAEPKEKAAKPKHERNGKGKDAKK). Positions 219–234 (KPAAPAVPQPVVSAEE) are enriched in low complexity. The span at 235–269 (QAQRDEEARRAAALRAHQEALLKEKQERQARREAM) shows a compositional bias: basic and acidic residues. Over residues 270 to 283 (KQQAEQQAKAAQEA) the composition is skewed to low complexity. 2 stretches are compositionally biased toward basic and acidic residues: residues 314 to 327 (AKKE…DEGQ) and 338 to 354 (GGRD…ERVR). Residues 462-631 (PRPPVVTVMG…LLEAEVLELT (170 aa)) form the tr-type G domain. The segment at 471-478 (GHVDHGKT) is G1. Position 471–478 (471–478 (GHVDHGKT)) interacts with GTP. The interval 496–500 (GITQH) is G2. A G3 region spans residues 517 to 520 (DTPG). GTP is bound by residues 517–521 (DTPGH) and 571–574 (NKID). Positions 571-574 (NKID) are G4. Positions 607–609 (SAK) are G5.

This sequence belongs to the TRAFAC class translation factor GTPase superfamily. Classic translation factor GTPase family. IF-2 subfamily.

It is found in the cytoplasm. In terms of biological role, one of the essential components for the initiation of protein synthesis. Protects formylmethionyl-tRNA from spontaneous hydrolysis and promotes its binding to the 30S ribosomal subunits. Also involved in the hydrolysis of GTP during the formation of the 70S ribosomal complex. In Neisseria meningitidis serogroup B (strain ATCC BAA-335 / MC58), this protein is Translation initiation factor IF-2.